The sequence spans 368 residues: DNA replication and repair protein RecF (368 aa).

30 to 37 (GNNAQGKT) lines the ATP pocket.

The protein belongs to the RecF family.

The protein resides in the cytoplasm. Functionally, the RecF protein is involved in DNA metabolism; it is required for DNA replication and normal SOS inducibility. RecF binds preferentially to single-stranded, linear DNA. It also seems to bind ATP. This is DNA replication and repair protein RecF from Streptococcus pyogenes serotype M4 (strain MGAS10750).